The primary structure comprises 295 residues: Uridine and thymidine phosphorylase (295 aa).

Phosphate-binding positions include Arg-81 and 125–128; that span reads RLGT. Substrate is bound by residues Gln-203 and Arg-205.

Belongs to the PNP/UDP phosphorylase family. In terms of tissue distribution, expressed in hypodermis, pharynx, spermatheca and gonad.

The catalysed reaction is uridine + phosphate = alpha-D-ribose 1-phosphate + uracil. It catalyses the reaction thymidine + phosphate = 2-deoxy-alpha-D-ribose 1-phosphate + thymine. The enzyme catalyses 2'-deoxyuridine + phosphate = 2-deoxy-alpha-D-ribose 1-phosphate + uracil. It functions in the pathway pyrimidine metabolism; UMP biosynthesis via salvage pathway; uracil from uridine (phosphorylase route): step 1/1. Its pathway is pyrimidine metabolism; dTMP biosynthesis via salvage pathway; dTMP from thymine: step 1/2. Functionally, catalyzes the reversible phosphorylytic cleavage of uridine and thymidine to uracil and ribose-phosphate or thymine and deoxyribose-1-phosphate. The produced molecules are then utilized as carbon and energy sources or in the rescue of pyrimidine bases for nucleotide synthesis. Required for normal lifespan. The chain is Uridine and thymidine phosphorylase from Caenorhabditis elegans.